Here is a 406-residue protein sequence, read N- to C-terminus: ATP synthase subunit a (406 aa).

Composition is skewed to low complexity over residues Ala-22 to Glu-31 and Asp-43 to Gly-59. The disordered stretch occupies residues Ala-22 to Ala-76. The next 6 membrane-spanning stretches (helical) occupy residues Lys-151–Val-171, Phe-209–Val-229, Ala-232–Ile-252, Leu-278–Phe-298, Leu-304–Ala-324, and Val-351–His-371. The tract at residues Asp-375–Gly-406 is disordered. Over residues Gly-383 to Gly-406 the composition is skewed to low complexity.

It belongs to the ATPase A chain family. As to quaternary structure, F-type ATPases have 2 components, CF(1) - the catalytic core - and CF(0) - the membrane proton channel. CF(1) has five subunits: alpha(3), beta(3), gamma(1), delta(1), epsilon(1). CF(0) has three main subunits: a(1), b(2) and c(9-12). The alpha and beta chains form an alternating ring which encloses part of the gamma chain. CF(1) is attached to CF(0) by a central stalk formed by the gamma and epsilon chains, while a peripheral stalk is formed by the delta and b chains.

The protein localises to the cell inner membrane. Its function is as follows. Key component of the proton channel; it plays a direct role in the translocation of protons across the membrane. This chain is ATP synthase subunit a, found in Anaeromyxobacter sp. (strain Fw109-5).